The sequence spans 139 residues: Immunogenic miracidial antigen 8I' (139 aa).

Positions 61–139 are disordered; it reads IDVGDEDYHD…PKKYGSGYKH (79 aa). Over residues 64–85 the composition is skewed to acidic residues; the sequence is GDEDYHDGDDDVDYTDDVDDVD. A compositionally biased stretch (polar residues) spans 90–103; sequence SPSQLLQGGYQRNQ.

The protein belongs to the immunogenic miracidial antigen family.

The protein is Immunogenic miracidial antigen 8I' (8I') of Schistosoma japonicum (Blood fluke).